Reading from the N-terminus, the 311-residue chain is Large ribosomal subunit protein uL22 (311 aa).

It belongs to the universal ribosomal protein uL22 family. In terms of assembly, part of the 50S ribosomal subunit.

This protein binds specifically to 23S rRNA; its binding is stimulated by other ribosomal proteins, e.g. L4, L17, and L20. It is important during the early stages of 50S assembly. It makes multiple contacts with different domains of the 23S rRNA in the assembled 50S subunit and ribosome. Its function is as follows. The globular domain of the protein is located near the polypeptide exit tunnel on the outside of the subunit, while an extended beta-hairpin is found that lines the wall of the exit tunnel in the center of the 70S ribosome. This Ureaplasma parvum serovar 3 (strain ATCC 27815 / 27 / NCTC 11736) protein is Large ribosomal subunit protein uL22 (rplV).